We begin with the raw amino-acid sequence, 152 residues long: Superoxide dismutase [Cu-Zn] (152 aa).

3 residues coordinate Cu cation: H45, H47, and H62. An intrachain disulfide couples C56 to C145. Positions 62, 70, 79, and 82 each coordinate Zn(2+). H119 lines the Cu cation pocket.

It belongs to the Cu-Zn superoxide dismutase family. As to quaternary structure, homodimer. Cu cation serves as cofactor. Zn(2+) is required as a cofactor.

The protein localises to the cytoplasm. The catalysed reaction is 2 superoxide + 2 H(+) = H2O2 + O2. Functionally, destroys radicals which are normally produced within the cells and which are toxic to biological systems. This Brassica oleracea var. capitata (Cabbage) protein is Superoxide dismutase [Cu-Zn] (SODCC).